A 46-amino-acid polypeptide reads, in one-letter code: Large ribosomal subunit protein bL33A (46 aa).

This sequence belongs to the bacterial ribosomal protein bL33 family.

In Mesomycoplasma hyopneumoniae (strain 7448) (Mycoplasma hyopneumoniae), this protein is Large ribosomal subunit protein bL33A.